The primary structure comprises 148 residues: Deoxyuridine 5'-triphosphate nucleotidohydrolase (148 aa).

Substrate is bound by residues R68–G70, N81, T85–D87, and K95.

Belongs to the dUTPase family. It depends on Mg(2+) as a cofactor.

It carries out the reaction dUTP + H2O = dUMP + diphosphate + H(+). It participates in pyrimidine metabolism; dUMP biosynthesis; dUMP from dCTP (dUTP route): step 2/2. Functionally, this enzyme is involved in nucleotide metabolism: it produces dUMP, the immediate precursor of thymidine nucleotides and it decreases the intracellular concentration of dUTP so that uracil cannot be incorporated into DNA. In Rickettsia prowazekii (strain Madrid E), this protein is Deoxyuridine 5'-triphosphate nucleotidohydrolase.